Reading from the N-terminus, the 440-residue chain is UDP-N-acetylmuramoylalanine--D-glutamate ligase (440 aa).

An ATP-binding site is contributed by 112 to 118 (GSNGKST).

Belongs to the MurCDEF family.

The protein resides in the cytoplasm. The enzyme catalyses UDP-N-acetyl-alpha-D-muramoyl-L-alanine + D-glutamate + ATP = UDP-N-acetyl-alpha-D-muramoyl-L-alanyl-D-glutamate + ADP + phosphate + H(+). It participates in cell wall biogenesis; peptidoglycan biosynthesis. Functionally, cell wall formation. Catalyzes the addition of glutamate to the nucleotide precursor UDP-N-acetylmuramoyl-L-alanine (UMA). The chain is UDP-N-acetylmuramoylalanine--D-glutamate ligase from Blochmanniella pennsylvanica (strain BPEN).